A 103-amino-acid chain; its full sequence is Small ribosomal subunit protein uS10 (103 aa).

Belongs to the universal ribosomal protein uS10 family. As to quaternary structure, part of the 30S ribosomal subunit.

Functionally, involved in the binding of tRNA to the ribosomes. This chain is Small ribosomal subunit protein uS10, found in Bordetella parapertussis (strain 12822 / ATCC BAA-587 / NCTC 13253).